We begin with the raw amino-acid sequence, 145 residues long: Class I hydrophobin rodE (145 aa).

Cystine bridges form between cysteine 43–cysteine 126, cysteine 59–cysteine 120, cysteine 60–cysteine 95, and cysteine 127–cysteine 140.

This sequence belongs to the fungal hydrophobin family. Self-assembles to form functional amyloid fibrils called rodlets. Self-assembly into fibrillar rodlets occurs spontaneously at hydrophobic:hydrophilic interfaces and the rodlets further associate laterally to form amphipathic monolayers.

Its function is as follows. Aerial growth, conidiation, and dispersal of filamentous fungi in the environment rely upon a capability of their secreting small amphipathic proteins called hydrophobins (HPBs) with low sequence identity. Class I can self-assemble into an outermost layer of rodlet bundles on aerial cell surfaces, conferring cellular hydrophobicity that supports fungal growth, development and dispersal; whereas Class II form highly ordered films at water-air interfaces through intermolecular interactions but contribute nothing to the rodlet structure. RodE is a class I hydrophobin that, unlike rodA, is not required for rodlet formation. This Aspergillus fumigatus (strain ATCC MYA-4609 / CBS 101355 / FGSC A1100 / Af293) (Neosartorya fumigata) protein is Class I hydrophobin rodE.